We begin with the raw amino-acid sequence, 276 residues long: Protein SCO1 homolog 2, mitochondrial (276 aa).

The transit peptide at 1–14 directs the protein to the mitochondrion; the sequence is MLPCRRLVLSCKNQ. Residues 66–82 form a helical membrane-spanning segment; it reads YAVPAILLGFAGFVGFL. The 164-residue stretch at 110-273 folds into the Thioredoxin domain; it reads VKGPIIGGPF…SQELLKEVAS (164 aa).

This sequence belongs to the SCO1/2 family. As to expression, expressed in the whole plant with highest expression in imbibed seeds and embryos, and the root hair zone.

The protein localises to the mitochondrion inner membrane. In terms of biological role, thought to play a role in cellular copper homeostasis, mitochondrial redox signaling or insertion of copper into the active site of COX. Participates in copper and redox homeostasis. The chain is Protein SCO1 homolog 2, mitochondrial (HCC2) from Arabidopsis thaliana (Mouse-ear cress).